The following is a 156-amino-acid chain: Small ribosomal subunit protein uS7 (156 aa).

Belongs to the universal ribosomal protein uS7 family. In terms of assembly, part of the 30S ribosomal subunit. Contacts proteins S9 and S11.

In terms of biological role, one of the primary rRNA binding proteins, it binds directly to 16S rRNA where it nucleates assembly of the head domain of the 30S subunit. Is located at the subunit interface close to the decoding center, probably blocks exit of the E-site tRNA. This chain is Small ribosomal subunit protein uS7, found in Salinispora tropica (strain ATCC BAA-916 / DSM 44818 / JCM 13857 / NBRC 105044 / CNB-440).